Consider the following 194-residue polypeptide: Large ribosomal subunit protein bL9c (194 aa).

The N-terminal 39 residues, 1–39 (MASSTLSSLSSTPLQHSFAANLKTCSQFPNKSSGFMVFA), are a transit peptide targeting the chloroplast.

It belongs to the bacterial ribosomal protein bL9 family. Part of the 50S ribosomal subunit.

The protein localises to the plastid. It localises to the chloroplast. Its function is as follows. Binds to the 23S rRNA. The sequence is that of Large ribosomal subunit protein bL9c (RPL9) from Pisum sativum (Garden pea).